Here is a 183-residue protein sequence, read N- to C-terminus: Proton-transporting V-type ATPase complex assembly regulator TMEM9 (183 aa).

The first 20 residues, 1–20, serve as a signal peptide directing secretion; it reads MKLLSLVAVVGCLLVPPAEA. Residues asparagine 21, asparagine 38, and asparagine 47 are each glycosylated (N-linked (GlcNAc...) asparagine). Residues 21 to 89 lie on the Extracellular side of the membrane; it reads NKSSEDIRCK…YEERSTTTIK (69 aa). A helical membrane pass occupies residues 90–110; it reads VIIVIYLSVVGALLLYMAFLM. Residues 111 to 183 lie on the Cytoplasmic side of the membrane; it reads LVDPLIRKPD…TVFDRHKMLS (73 aa). Phosphoserine is present on residues serine 137 and serine 144.

The protein belongs to the TMEM9 family. As to quaternary structure, interacts with the v-ATPase accessory protein ATP6AP2 and with the v-ATPase complex subunit ATP6V0D1; these interactions lead to the assembly of the v-ATPase complex. Post-translationally, N-glycosylated. In terms of tissue distribution, highly expressed in adrenal gland, thyroid gland, testis, ovary and prostate. Moderate expression in trachea, spinal cord, stomach, colon, small intestine and spleen. Low expression in bone marrow, lymph node, thymus and peripheral blood lymphocytes. Expression is detected in hematopoietic cell lines including those of myeloid, erythroid, B- and T-cell origin.

It localises to the lysosome membrane. The protein resides in the late endosome membrane. It is found in the endosome. Its subcellular location is the multivesicular body membrane. Transmembrane protein that binds to and facilitates the assembly of lysosomal proton-transporting V-type ATPase (v-ATPase), resulting in enhanced lysosomal acidification and trafficking. By bringing the v-ATPase accessory protein ATP6AP2 and the v-ATPase subunit ATP6V0D1 together, allows v-ATPase complex formation and activation. TMEM9-controlled vesicular acidification induces hyperactivation of Wnt/beta-catenin signaling, involved in development, tissue homeostasis and tissue regeneration, through lysosomal degradation of adenomatous polyposis coli/APC. In the liver, involved in hepatic regeneration. The sequence is that of Proton-transporting V-type ATPase complex assembly regulator TMEM9 from Homo sapiens (Human).